The chain runs to 173 residues: Cytochrome c-type biogenesis protein CcmE (173 aa).

Over 1–8 (MMSRKKRR) the chain is Cytoplasmic. A helical; Signal-anchor for type II membrane protein transmembrane segment spans residues 9–29 (LWIVIACGIGLSTAVALMLFA). The Periplasmic portion of the chain corresponds to 30–173 (FRSSLSFFMS…PAQIEASNNG (144 aa)). The heme site is built by H127 and Y131. The interval 145-173 (KWNPKFGPPPNAGAWDDKSPAQIEASNNG) is disordered.

The protein belongs to the CcmE/CycJ family.

It localises to the cell inner membrane. Heme chaperone required for the biogenesis of c-type cytochromes. Transiently binds heme delivered by CcmC and transfers the heme to apo-cytochromes in a process facilitated by CcmF and CcmH. In Acidiphilium cryptum (strain JF-5), this protein is Cytochrome c-type biogenesis protein CcmE.